The primary structure comprises 158 residues: MIDDNGYRLNVGIVLCNTYGQVLWAKRYKQCSWQFPQGGINIGETPEQAMYRELFEEIGLNYCDVRILSITRCWFCYKLPTQLVRWRIKPLCLGQKQKWFLLKLLSKDTKINMKTSKVCTFDTWQWVSLWYPIRQVVFFKRHVYRKVMKEFVKLIISR.

The Nudix hydrolase domain occupies 6-149; it reads GYRLNVGIVL…KRHVYRKVMK (144 aa). The Nudix box motif lies at 38–59; that stretch reads GGINIGETPEQAMYRELFEEIG.

Belongs to the Nudix hydrolase family. RppH subfamily. A divalent metal cation is required as a cofactor.

In terms of biological role, accelerates the degradation of transcripts by removing pyrophosphate from the 5'-end of triphosphorylated RNA, leading to a more labile monophosphorylated state that can stimulate subsequent ribonuclease cleavage. The polypeptide is RNA pyrophosphohydrolase (Blochmanniella floridana).